Reading from the N-terminus, the 118-residue chain is MTRIAGVNIPEKKHIVIALKKIYGIGNVLARKICKKTGINFSKKVNSLDSSEIELIRNEVLKLKIEGDLRREMTLNIKRLIDLGTYRGLRHKKHLPVRGQRTKTNARTRKGPRKPIKK.

Residues 92–118 are disordered; sequence KKHLPVRGQRTKTNARTRKGPRKPIKK.

Belongs to the universal ribosomal protein uS13 family. Part of the 30S ribosomal subunit. Forms a loose heterodimer with protein S19. Forms two bridges to the 50S subunit in the 70S ribosome.

Functionally, located at the top of the head of the 30S subunit, it contacts several helices of the 16S rRNA. In the 70S ribosome it contacts the 23S rRNA (bridge B1a) and protein L5 of the 50S subunit (bridge B1b), connecting the 2 subunits; these bridges are implicated in subunit movement. Contacts the tRNAs in the A and P-sites. The protein is Small ribosomal subunit protein uS13 of Wigglesworthia glossinidia brevipalpis.